The sequence spans 96 residues: Putative pterin-4-alpha-carbinolamine dehydratase (96 aa).

This sequence belongs to the pterin-4-alpha-carbinolamine dehydratase family.

The enzyme catalyses (4aS,6R)-4a-hydroxy-L-erythro-5,6,7,8-tetrahydrobiopterin = (6R)-L-erythro-6,7-dihydrobiopterin + H2O. This is Putative pterin-4-alpha-carbinolamine dehydratase from Herpetosiphon aurantiacus (strain ATCC 23779 / DSM 785 / 114-95).